Reading from the N-terminus, the 120-residue chain is MKILFVLISILYAVYCFSSEEDVDSAYLANELEPVEDINSEQYAALEPKEEQERSCADMGQDCKDDCDCCLNIATCNCWFGRYFCSCTFGDYQTCLRKKGKCKRNRPQSCPRSNLNRKKG.

A signal peptide spans 1-16; that stretch reads MKILFVLISILYAVYC. The propeptide occupies 17 to 54; the sequence is FSSEEDVDSAYLANELEPVEDINSEQYAALEPKEEQER. 4 cysteine pairs are disulfide-bonded: C56–C70, C63–C76, C69–C87, and C78–C85. The 40-residue stretch at 56–95 folds into the Agouti domain; that stretch reads CADMGQDCKDDCDCCLNIATCNCWFGRYFCSCTFGDYQTC.

It belongs to the neurotoxin 05 (agouti) family. Post-translationally, contains 6 disulfide bonds. As to expression, expressed by the venom gland.

It is found in the secreted. The polypeptide is U13-lycotoxin-Ls1a (Lycosa singoriensis (Wolf spider)).